Here is a 145-residue protein sequence, read N- to C-terminus: Putative esterase PA1618 (145 aa).

It belongs to the thioesterase PaaI family.

The chain is Putative esterase PA1618 from Pseudomonas aeruginosa (strain ATCC 15692 / DSM 22644 / CIP 104116 / JCM 14847 / LMG 12228 / 1C / PRS 101 / PAO1).